The primary structure comprises 372 residues: Cobalt-precorrin-5B C(1)-methyltransferase (372 aa).

The protein belongs to the CbiD family.

It catalyses the reaction Co-precorrin-5B + S-adenosyl-L-methionine = Co-precorrin-6A + S-adenosyl-L-homocysteine. It participates in cofactor biosynthesis; adenosylcobalamin biosynthesis; cob(II)yrinate a,c-diamide from sirohydrochlorin (anaerobic route): step 6/10. Catalyzes the methylation of C-1 in cobalt-precorrin-5B to form cobalt-precorrin-6A. The polypeptide is Cobalt-precorrin-5B C(1)-methyltransferase (Prochlorococcus marinus (strain MIT 9515)).